A 550-amino-acid chain; its full sequence is Parathyroid hormone 2 receptor (550 aa).

The signal sequence occupies residues Met-1–Ala-24. Residues Asp-27–Tyr-145 lie on the Extracellular side of the membrane. N-linked (GlcNAc...) asparagine glycosylation is found at Asn-51, Asn-106, Asn-116, and Asn-121. Residues Val-146–Phe-169 form a helical membrane-spanning segment. The Cytoplasmic segment spans residues Arg-170–Arg-176. Residues Asn-177–Val-196 form a helical membrane-spanning segment. Topologically, residues Lys-197–Lys-237 are extracellular. The chain crosses the membrane as a helical span at residues Ile-238 to Tyr-260. Over Leu-261–Tyr-275 the chain is Cytoplasmic. Residues Leu-276–Ala-297 traverse the membrane as a helical segment. Residues Arg-298–Trp-316 lie on the Extracellular side of the membrane. A helical transmembrane segment spans residues Ile-317 to Val-337. Residues Arg-338 to Ser-364 are Cytoplasmic-facing. The chain crosses the membrane as a helical span at residues Thr-365 to Pro-383. Over His-384–Arg-394 the chain is Extracellular. Residues Met-395–Asn-417 form a helical membrane-spanning segment. The Cytoplasmic portion of the chain corresponds to Gly-418–Leu-550. Basic and acidic residues predominate over residues Glu-511–Arg-531. The tract at residues Glu-511–Leu-550 is disordered.

This sequence belongs to the G-protein coupled receptor 2 family. As to quaternary structure, binds to TIPF39/TIP39. As to expression, expressed abundantly in brain and pancreas. Also expressed in the testis.

Its subcellular location is the cell membrane. Functionally, this is a specific receptor for parathyroid hormone. The activity of this receptor is mediated by G proteins which activate adenylyl cyclase. PTH2R may be responsible for PTH effects in a number of physiological systems. It may play a significant role in pancreatic function. PTH2R presence in neurons indicates that it may function as a neurotransmitter receptor. This is Parathyroid hormone 2 receptor (PTH2R) from Homo sapiens (Human).